A 144-amino-acid chain; its full sequence is Ribonuclease H (144 aa).

An RNase H type-1 domain is found at 1–141 (MDKIDIYSDG…ADALANRGVE (141 aa)). Mg(2+)-binding residues include D9, E47, D69, and D133.

Belongs to the RNase H family. As to quaternary structure, monomer. Mg(2+) is required as a cofactor.

The protein resides in the cytoplasm. The enzyme catalyses Endonucleolytic cleavage to 5'-phosphomonoester.. In terms of biological role, endonuclease that specifically degrades the RNA of RNA-DNA hybrids. This chain is Ribonuclease H, found in Janthinobacterium sp. (strain Marseille) (Minibacterium massiliensis).